A 213-amino-acid chain; its full sequence is Glutathione S-transferase PARB (213 aa).

Positions 1–82 (MAIKVHGSPM…YIAHVYADNG (82 aa)) constitute a GST N-terminal domain. Glutathione is bound by residues S11, 12 to 13 (TA), 40 to 41 (HK), 53 to 54 (QV), and 66 to 67 (ES). The region spanning 89–213 (DPKKMPSMSV…WVKGLEKLQK (125 aa)) is the GST C-terminal domain.

This sequence belongs to the GST superfamily. Phi family.

The catalysed reaction is RX + glutathione = an S-substituted glutathione + a halide anion + H(+). Conjugation of reduced glutathione to a wide number of exogenous and endogenous hydrophobic electrophiles. This Nicotiana tabacum (Common tobacco) protein is Glutathione S-transferase PARB.